Here is a 223-residue protein sequence, read N- to C-terminus: Urease accessory protein UreF (223 aa).

The protein belongs to the UreF family. In terms of assembly, ureD, UreF and UreG form a complex that acts as a GTP-hydrolysis-dependent molecular chaperone, activating the urease apoprotein by helping to assemble the nickel containing metallocenter of UreC. The UreE protein probably delivers the nickel.

It is found in the cytoplasm. Its function is as follows. Required for maturation of urease via the functional incorporation of the urease nickel metallocenter. This chain is Urease accessory protein UreF, found in Rhizobium leguminosarum bv. trifolii (strain WSM2304).